The primary structure comprises 387 residues: DNA-damage-repair/toleration protein 111 (387 aa).

Positions 1-213 (MLGGLYGDLP…TSGLGVGAGG (213 aa)) are disordered. Residues 19–29 (SGNSSSVWSSS) show a composition bias toward low complexity. The span at 103 to 158 (DPARPNDYEEYKREKKRKATEAEMKREMDKRRQEDEERDKREREEREKERERDNSD) shows a compositional bias: basic and acidic residues. The G-patch domain maps to 214–260 (QMTAAQRMMAKMGWKQGQGLGKSEQGITTPLMAKKTDRRAGVIVNAS). An RRM domain is found at 283-369 (RVLLLRNMVG…RTVRATFYDE (87 aa)).

In terms of assembly, component of the SWAP1-SFPS-RRC1 splicing factor complex which modulates pre-mRNA splicing to promote photomorphogenesis. Interacts with SWAP1 in a light-independent manner. Associates with the photoreceptor phytochrome B (phyB) in nuclear photobodies upon response to red light. Binds to the splicing factor 1 SF1, involved in 3' splicing site recognition. In terms of tissue distribution, expressed ubiquitously with highest levels in dry seeds and in cells surrounding the base of trichomes and guard cells.

The protein resides in the nucleus. It localises to the nucleus speckle. Its function is as follows. As a member of the SWAP1-SFPS-RRC1 splicing factor complex, modulates photomorphogenesis by regulating the gene expression and pre-messenger RNA (mRNA) alternative splicing of a large number of genes, including those involved in plant responses to light signaling, probably by helping in the 3' splice site determination. Associates with and regulates EARLY FLOWERING 3 (ELF3) mRNA processing, a key component of the circadian clock also involved in photomorphogenesis. Required for light-regulated (red, far-red and blue lights) photomorphogenesis in a PHYB- and PHYTOCHROME INTERACTING FACTORS- (PIFs) dependent manner. Promotes flowering under both short (SD) and long days (LD). Controls abscisic acid (ABA) sensitivity during seed development, stomatal responsiveness and germination by monitoring ABI3 splicing, upstream of the splicing factor SUPPRESSOR OF ABI3-ABI5. Seems to be involved in the resistance to UV light and chemical DNA-damaging agents. This chain is DNA-damage-repair/toleration protein 111, found in Arabidopsis thaliana (Mouse-ear cress).